The sequence spans 176 residues: Cytochrome b (176 aa).

Helical transmembrane passes span 33 to 53, 77 to 98, and 113 to 133; these read FGSLLGVCLMMQILTGLFLAM, WLLRYLHANGASMFFICLYLHI, and WNVGIILLFAVMATAFMGYVL. The heme b site is built by His83 and His97.

It belongs to the cytochrome b family. As to quaternary structure, the cytochrome bc1 complex contains 11 subunits: 3 respiratory subunits (MT-CYB, CYC1 and UQCRFS1), 2 core proteins (UQCRC1 and UQCRC2) and 6 low-molecular weight proteins (UQCRH/QCR6, UQCRB/QCR7, UQCRQ/QCR8, UQCR10/QCR9, UQCR11/QCR10 and a cleavage product of UQCRFS1). This cytochrome bc1 complex then forms a dimer. Heme b is required as a cofactor.

Its subcellular location is the mitochondrion inner membrane. Component of the ubiquinol-cytochrome c reductase complex (complex III or cytochrome b-c1 complex) that is part of the mitochondrial respiratory chain. The b-c1 complex mediates electron transfer from ubiquinol to cytochrome c. Contributes to the generation of a proton gradient across the mitochondrial membrane that is then used for ATP synthesis. The protein is Cytochrome b (MT-CYB) of Promops centralis (Big crested mastiff bat).